We begin with the raw amino-acid sequence, 445 residues long: Tubulin beta-3 chain (445 aa).

8 residues coordinate GTP: Gln-11, Glu-69, Ser-138, Gly-142, Thr-143, Gly-144, Asn-204, and Asn-226. Glu-69 contacts Mg(2+). A disordered region spans residues 425 to 445 (YQDATAEEYDEEEQDGEEEHD). Over residues 429–445 (TAEEYDEEEQDGEEEHD) the composition is skewed to acidic residues.

Belongs to the tubulin family. In terms of assembly, dimer of alpha and beta chains. A typical microtubule is a hollow water-filled tube with an outer diameter of 25 nm and an inner diameter of 15 nM. Alpha-beta heterodimers associate head-to-tail to form protofilaments running lengthwise along the microtubule wall with the beta-tubulin subunit facing the microtubule plus end conferring a structural polarity. Microtubules usually have 13 protofilaments but different protofilament numbers can be found in some organisms and specialized cells. Mg(2+) serves as cofactor.

It is found in the cytoplasm. Its subcellular location is the cytoskeleton. In terms of biological role, tubulin is the major constituent of microtubules, a cylinder consisting of laterally associated linear protofilaments composed of alpha- and beta-tubulin heterodimers. Microtubules grow by the addition of GTP-tubulin dimers to the microtubule end, where a stabilizing cap forms. Below the cap, tubulin dimers are in GDP-bound state, owing to GTPase activity of alpha-tubulin. The chain is Tubulin beta-3 chain (TUBB3) from Zea mays (Maize).